The chain runs to 64 residues: Small ribosomal subunit protein eS17 (64 aa).

This sequence belongs to the eukaryotic ribosomal protein eS17 family.

This is Small ribosomal subunit protein eS17 from Natronomonas pharaonis (strain ATCC 35678 / DSM 2160 / CIP 103997 / JCM 8858 / NBRC 14720 / NCIMB 2260 / Gabara) (Halobacterium pharaonis).